A 223-amino-acid chain; its full sequence is Ribose-5-phosphate isomerase A (223 aa).

Substrate-binding positions include 32–35, 85–88, and 98–101; these read TGST, DGAD, and KGGG. The active-site Proton acceptor is E107. Substrate is bound at residue K125.

Belongs to the ribose 5-phosphate isomerase family. Homodimer.

The enzyme catalyses aldehydo-D-ribose 5-phosphate = D-ribulose 5-phosphate. It functions in the pathway carbohydrate degradation; pentose phosphate pathway; D-ribose 5-phosphate from D-ribulose 5-phosphate (non-oxidative stage): step 1/1. Functionally, catalyzes the reversible conversion of ribose-5-phosphate to ribulose 5-phosphate. This is Ribose-5-phosphate isomerase A from Pseudomonas syringae pv. tomato (strain ATCC BAA-871 / DC3000).